The chain runs to 239 residues: Cyclo(L-leucyl-L-phenylalanyl) synthase (239 aa).

The Nucleophile role is filled by Ser37. Substrate-binding positions include Asn40, 178–182 (YVLAE), and Tyr202.

Belongs to the CDPS family. In terms of assembly, monomer.

It carries out the reaction L-phenylalanyl-tRNA(Phe) + L-leucyl-tRNA(Leu) = cyclo(L-phenylalanyl-L-leucyl) + tRNA(Phe) + tRNA(Leu) + H(+). In terms of biological role, involved in the biosynthesis of albonoursin (cyclo[(alpha,beta-dehydro-Phe)-(alpha,beta-dehydro-Leu)]), an antibacterial peptide. It uses activated amino acids in the form of aminoacyl-tRNAs (aa-tRNAs) as substrates to catalyze the ATP-independent formation of cyclodipeptides which are intermediates in diketopiperazine (DKP) biosynthetic pathways. Catalyzes the formation of cyclo(L-Phe-L-Leu) (cFL) as major products from L-L-phenylalanyl-tRNA(Phe) and L-leucyl-tRNA(Leu). AlbC can also incorporate various nonpolar residues, such as L-phenylalanine, L-leucine, L-tyrosine and L-methionine, and to a much lesser extent L-alanine and L-valine, into cyclodipeptides. Indeed, ten possible cyclodipeptides composed of L-phenylalanine, L-leucine, L-tyrosine and L-methionine are all synthesized to detectable amounts by AlbC. The chain is Cyclo(L-leucyl-L-phenylalanyl) synthase (albC) from Streptomyces noursei (Streptomyces albulus).